A 173-amino-acid chain; its full sequence is Thaumatin-like protein PWIR2 (173 aa).

The signal sequence occupies residues 1–20 (MATSPVLFLLLAVFAAGASA).

Belongs to the thaumatin family.

The polypeptide is Thaumatin-like protein PWIR2 (Triticum aestivum (Wheat)).